Here is a 329-residue protein sequence, read N- to C-terminus: 7,8-didemethyl-8-hydroxy-5-deazariboflavin synthase (329 aa).

Positions 6-244 (ITYTKNVFLP…EEISIQVAPN (239 aa)) constitute a Radical SAM core domain. The [4Fe-4S] cluster site is built by Cys-20, Cys-24, and Cys-27.

The protein belongs to the radical SAM superfamily. CofG family. Consists of two subunits, CofG and CofH. The cofactor is [4Fe-4S] cluster.

It catalyses the reaction 5-amino-5-(4-hydroxybenzyl)-6-(D-ribitylimino)-5,6-dihydrouracil + S-adenosyl-L-methionine = 7,8-didemethyl-8-hydroxy-5-deazariboflavin + 5'-deoxyadenosine + L-methionine + NH4(+) + H(+). It participates in cofactor biosynthesis; coenzyme F0 biosynthesis. Its function is as follows. Catalyzes the radical-mediated synthesis of 7,8-didemethyl-8-hydroxy-5-deazariboflavin from 5-amino-5-(4-hydroxybenzyl)-6-(D-ribitylimino)-5,6-dihydrouracil. This is 7,8-didemethyl-8-hydroxy-5-deazariboflavin synthase from Methanoregula boonei (strain DSM 21154 / JCM 14090 / 6A8).